Consider the following 490-residue polypeptide: Bifunctional protein HldE (490 aa).

The tract at residues 1–330 is ribokinase; sequence MSRFDTLLQS…RKILPHASLA (330 aa). 205 to 208 contacts ATP; the sequence is NRKE. The active site involves Asp-275. Residues 358 to 490 form a cytidylyltransferase region; sequence FTNGCFDILH…LVEKAREGTT (133 aa).

This sequence in the N-terminal section; belongs to the carbohydrate kinase PfkB family. In the C-terminal section; belongs to the cytidylyltransferase family. In terms of assembly, homodimer.

The catalysed reaction is D-glycero-beta-D-manno-heptose 7-phosphate + ATP = D-glycero-beta-D-manno-heptose 1,7-bisphosphate + ADP + H(+). The enzyme catalyses D-glycero-beta-D-manno-heptose 1-phosphate + ATP + H(+) = ADP-D-glycero-beta-D-manno-heptose + diphosphate. The protein operates within nucleotide-sugar biosynthesis; ADP-L-glycero-beta-D-manno-heptose biosynthesis; ADP-L-glycero-beta-D-manno-heptose from D-glycero-beta-D-manno-heptose 7-phosphate: step 1/4. It participates in nucleotide-sugar biosynthesis; ADP-L-glycero-beta-D-manno-heptose biosynthesis; ADP-L-glycero-beta-D-manno-heptose from D-glycero-beta-D-manno-heptose 7-phosphate: step 3/4. Its function is as follows. Catalyzes the phosphorylation of D-glycero-D-manno-heptose 7-phosphate at the C-1 position to selectively form D-glycero-beta-D-manno-heptose-1,7-bisphosphate. Functionally, catalyzes the ADP transfer from ATP to D-glycero-beta-D-manno-heptose 1-phosphate, yielding ADP-D-glycero-beta-D-manno-heptose. In Rhodopseudomonas palustris (strain BisB5), this protein is Bifunctional protein HldE.